The chain runs to 159 residues: RNA pyrophosphohydrolase (159 aa).

A Nudix hydrolase domain is found at 6 to 149 (GFRPNVGIIL…KREVYRRALK (144 aa)). Residues 38–59 (GGINPDETPEDALYRELNEEVG) carry the Nudix box motif.

This sequence belongs to the Nudix hydrolase family. RppH subfamily. The cofactor is a divalent metal cation.

Accelerates the degradation of transcripts by removing pyrophosphate from the 5'-end of triphosphorylated RNA, leading to a more labile monophosphorylated state that can stimulate subsequent ribonuclease cleavage. The sequence is that of RNA pyrophosphohydrolase from Pseudomonas fluorescens (strain ATCC BAA-477 / NRRL B-23932 / Pf-5).